The primary structure comprises 640 residues: 1-deoxy-D-xylulose-5-phosphate synthase (640 aa).

Thiamine diphosphate contacts are provided by residues histidine 79 and 120 to 122; that span reads AHS. Aspartate 151 is a binding site for Mg(2+). Thiamine diphosphate-binding positions include 152-153, asparagine 180, tyrosine 289, and glutamate 371; that span reads GA. Asparagine 180 provides a ligand contact to Mg(2+).

It belongs to the transketolase family. DXPS subfamily. Homodimer. Mg(2+) is required as a cofactor. Requires thiamine diphosphate as cofactor.

The enzyme catalyses D-glyceraldehyde 3-phosphate + pyruvate + H(+) = 1-deoxy-D-xylulose 5-phosphate + CO2. It functions in the pathway metabolic intermediate biosynthesis; 1-deoxy-D-xylulose 5-phosphate biosynthesis; 1-deoxy-D-xylulose 5-phosphate from D-glyceraldehyde 3-phosphate and pyruvate: step 1/1. In terms of biological role, catalyzes the acyloin condensation reaction between C atoms 2 and 3 of pyruvate and glyceraldehyde 3-phosphate to yield 1-deoxy-D-xylulose-5-phosphate (DXP). This chain is 1-deoxy-D-xylulose-5-phosphate synthase, found in Erythrobacter litoralis (strain HTCC2594).